The chain runs to 284 residues: Bifunctional protein FolD 1 (284 aa).

Residues 166–168 (GAS) and Ile232 each bind NADP(+).

The protein belongs to the tetrahydrofolate dehydrogenase/cyclohydrolase family. In terms of assembly, homodimer.

The enzyme catalyses (6R)-5,10-methylene-5,6,7,8-tetrahydrofolate + NADP(+) = (6R)-5,10-methenyltetrahydrofolate + NADPH. It catalyses the reaction (6R)-5,10-methenyltetrahydrofolate + H2O = (6R)-10-formyltetrahydrofolate + H(+). Its pathway is one-carbon metabolism; tetrahydrofolate interconversion. In terms of biological role, catalyzes the oxidation of 5,10-methylenetetrahydrofolate to 5,10-methenyltetrahydrofolate and then the hydrolysis of 5,10-methenyltetrahydrofolate to 10-formyltetrahydrofolate. This is Bifunctional protein FolD 1 from Pseudomonas savastanoi pv. phaseolicola (strain 1448A / Race 6) (Pseudomonas syringae pv. phaseolicola (strain 1448A / Race 6)).